The primary structure comprises 935 residues: Intimin (935 aa).

An N-terminal signal peptide occupies residues 1–41; sequence MITHGFYARTRHKHKLKKTFIMLSAGLGLFFYVNQNSFANG. A peptidoglycan-binding region spans residues 40–153; it reads NGENYFKLSS…KMTKMSPDAT (114 aa). The segment at 40–153 is sufficient for homodimerization; the sequence is NGENYFKLSS…KMTKMSPDAT (114 aa). The required for periplasmic localization stretch occupies residues 40–212; it reads NGENYFKLSS…LQAWLQHYGT (173 aa). The region spanning 63-112 is the LysM domain; that stretch reads LFYTLKTGETVSSISKSQGISLSVIWSLNKHLYSSESEMLKAAPGQQIIL. The segment at 210 to 411 is inverse autotransporter; sequence YGTAEVNLQS…LYSMQFRYQF (202 aa). Residues 402 to 411 are signature sequence for beta-barrel assembly machinery (BAM), which recognizes the unfolded beta-barrel in the periplasm; it reads LYSMQFRYQF. 2 consecutive Big-1 domains span residues 560–653 and 660–754; these read VTDF…VIFV and ITEI…VTFF. The 45-residue stretch at 790–834 folds into the BIG2 domain; that stretch reads GGNGTYSWHSENTNIATVDESGKVTLKGKGTAVINVTSGDKQTVS. A disulfide bridge connects residues cysteine 859 and cysteine 933.

This sequence belongs to the intimin/invasin family. As to quaternary structure, homodimer. Interacts with Tir.

The protein resides in the cell outer membrane. An inverse autotransporter. Adhesin, which mediates attachment to the human intestine epithelial cells. Necessary for the production of attaching and effacing lesions on infected human tissue culture cells. Anchored to the outer membrane by binding to peptidoglycan (PGN) via its periplasmic domain, thus helping in receptor interactions during host invasion. PGN-binding may also aid in resisting mechanical and chemical stress during transit of the bacterium through the gastrointestinal tract of the host. The protein is Intimin (eae) of Escherichia coli O111:H-.